Consider the following 876-residue polypeptide: Valine--tRNA ligase (876 aa).

The 'HIGH' region motif lies at 44 to 54 (PNVTGKLHLGH). The 'KMSKS' region signature appears at 520–524 (KMSKS). Residue Lys-523 participates in ATP binding. The stretch at 805-876 (LEGLIDMDKE…VKARIEQLKA (72 aa)) forms a coiled coil.

Belongs to the class-I aminoacyl-tRNA synthetase family. ValS type 1 subfamily. As to quaternary structure, monomer.

It is found in the cytoplasm. The enzyme catalyses tRNA(Val) + L-valine + ATP = L-valyl-tRNA(Val) + AMP + diphosphate. In terms of biological role, catalyzes the attachment of valine to tRNA(Val). As ValRS can inadvertently accommodate and process structurally similar amino acids such as threonine, to avoid such errors, it has a 'posttransfer' editing activity that hydrolyzes mischarged Thr-tRNA(Val) in a tRNA-dependent manner. The chain is Valine--tRNA ligase from Staphylococcus carnosus (strain TM300).